A 404-amino-acid chain; its full sequence is tRNA (carboxymethyluridine(34)-5-O)-methyltransferase (404 aa).

Ser-238 bears the Phosphoserine mark.

Interacts with TRM112A and TRM112B.

The catalysed reaction is 5-(carboxymethyl)uridine(34) in tRNA + S-adenosyl-L-methionine = 5-(2-methoxy-2-oxoethyl)uridine(34) in tRNA + S-adenosyl-L-homocysteine. Its function is as follows. Catalyzes the methylation of 5-carboxymethyl uridine to 5-methylcarboxymethyl uridine at the wobble position of the anticodon loop in tRNA via its methyltransferase domain. Catalyzes the last step in the formation of 5-methylcarboxymethyl uridine at the wobble position of the anticodon loop in target tRNA. The polypeptide is tRNA (carboxymethyluridine(34)-5-O)-methyltransferase (Arabidopsis thaliana (Mouse-ear cress)).